The following is a 670-amino-acid chain: uncharacterized protein (670 aa).

Transmembrane regions (helical) follow at residues tyrosine 23–asparagine 42, tyrosine 47–leucine 69, leucine 76–leucine 98, valine 118–threonine 140, valine 153–leucine 170, glutamine 381–alanine 403, serine 410–valine 432, leucine 437–leucine 454, phenylalanine 461–valine 483, and asparagine 493–leucine 510.

It belongs to the aromatic acid exporter ArAE (TC 2.A.85) family.

The protein localises to the cell membrane. This is an uncharacterized protein from Escherichia coli (strain K12).